The following is a 420-amino-acid chain: Probable pectate lyase C (420 aa).

Positions 1–20 are cleaved as a signal peptide; sequence MKLSAPLLVSLAAFSQAVTA. Residues asparagine 49, asparagine 165, and asparagine 202 are each glycosylated (N-linked (GlcNAc...) asparagine). Arginine 205 is a catalytic residue. The EF-hand domain occupies 262–297; it reads NANFHGYVQNNYYDPDKDGQLDGFELGVSSSNYGGV. The Ca(2+) site is built by aspartate 275, aspartate 277, aspartate 279, glutamine 281, and glutamate 286. The disordered stretch occupies residues 358-396; the sequence is TMGGPGTLNGGTPAKDTDGDGIPDEAEKQLGTDPNTNDS. N-linked (GlcNAc...) asparagine glycosylation is present at asparagine 394.

It belongs to the polysaccharide lyase 1 family. Ca(2+) is required as a cofactor.

It is found in the secreted. The catalysed reaction is Eliminative cleavage of (1-&gt;4)-alpha-D-galacturonan to give oligosaccharides with 4-deoxy-alpha-D-galact-4-enuronosyl groups at their non-reducing ends.. Functionally, pectinolytic enzyme consist of four classes of enzymes: pectin lyase, polygalacturonase, pectin methylesterase and rhamnogalacturonase. Among pectinolytic enzymes, pectin lyase is the most important in depolymerization of pectin, since it cleaves internal glycosidic bonds of highly methylated pectins. Favors pectate, the anion, over pectin, the methyl ester. This Aspergillus fumigatus (strain CBS 144.89 / FGSC A1163 / CEA10) (Neosartorya fumigata) protein is Probable pectate lyase C (plyC).